The sequence spans 160 residues: Large ribosomal subunit protein uL16 (160 aa).

Residues 138–148 (KNLEVSSQENT) show a composition bias toward polar residues. A disordered region spans residues 138–160 (KNLEVSSQENTKNNKESQEEVKQ). Basic and acidic residues predominate over residues 149–160 (KNNKESQEEVKQ).

It belongs to the universal ribosomal protein uL16 family. As to quaternary structure, part of the 50S ribosomal subunit.

Binds 23S rRNA and is also seen to make contacts with the A and possibly P site tRNAs. In Prochlorococcus marinus (strain MIT 9312), this protein is Large ribosomal subunit protein uL16.